A 189-amino-acid chain; its full sequence is Peptidyl-tRNA hydrolase (189 aa).

Histidine 19 serves as the catalytic Proton acceptor. 3 residues coordinate tRNA: tyrosine 64, asparagine 66, and asparagine 112.

This sequence belongs to the PTH family. In terms of assembly, monomer.

It is found in the cytoplasm. The catalysed reaction is an N-acyl-L-alpha-aminoacyl-tRNA + H2O = an N-acyl-L-amino acid + a tRNA + H(+). Functionally, hydrolyzes ribosome-free peptidyl-tRNAs (with 1 or more amino acids incorporated), which drop off the ribosome during protein synthesis, or as a result of ribosome stalling. Its function is as follows. Catalyzes the release of premature peptidyl moieties from peptidyl-tRNA molecules trapped in stalled 50S ribosomal subunits, and thus maintains levels of free tRNAs and 50S ribosomes. The polypeptide is Peptidyl-tRNA hydrolase (Gluconobacter oxydans (strain 621H) (Gluconobacter suboxydans)).